A 449-amino-acid polypeptide reads, in one-letter code: MMLGAEGGEGFVVKVRGLPWSCSADEVQRFFSDCKIQNGAQGIRFIYTREGRPSGEAFVELESEDEVKLALKKDRETMGHRYVEVFKSNNVEMDWVLKHTGPNSPDTANDGFVRLRGLPFGCSKEEIVQFFSGLEIVPNGITLPVDFQGRSTGEAFVQFASQEIAEKALKKHKERIGHRYIEIFKSSRAEVRTHYDPPRKLMAMQRPGPYDRPGAGRGYNSIGRGAGFERMRRGAYGGGYGGYDDYNGYNDGYGFGSDRFGRDLNYCFSGMSDHRYGDGGSTFQSTTGHCVHMRGLPYRATENDIYNFFSPLNPVRVHIEIGPDGRVTGEADVEFATHEDAVAAMSKDKANMQHRYVELFLNSTAGASGGAYEHRYVELFLNSTAGASGGAYGSQMMGGMGLSNQSSYGGPASQQLSGGYGGGYGGQSSMSGYDQVLQENSSDFQSNIA.

N-acetylmethionine is present on methionine 1. An N-acetylmethionine; in Heterogeneous nuclear ribonucleoprotein H, N-terminally processed modification is found at methionine 2. An RRM 1 domain is found at 11–90; it reads FVVKVRGLPW…RYVEVFKSNN (80 aa). Residue serine 23 is modified to Phosphoserine. A Glycyl lysine isopeptide (Lys-Gly) (interchain with G-Cter in SUMO2) cross-link involves residue lysine 35. Residues serine 54 and serine 63 each carry the phosphoserine modification. Glycyl lysine isopeptide (Lys-Gly) (interchain with G-Cter in SUMO2) cross-links involve residues lysine 87 and lysine 98. Positions 111–188 constitute an RRM 2 domain; sequence GFVRLRGLPF…RYIEIFKSSR (78 aa). Arginine 233 is subject to Dimethylated arginine; alternate. The residue at position 233 (arginine 233) is an Omega-N-methylarginine; alternate. The stretch at 234–249 is one 1-1 repeat; that stretch reads GAYGGGYGGYDDYNGY. The interval 234–433 is 2 X 16 AA Gly-rich approximate repeats; sequence GAYGGGYGGY…YGGQSSMSGY (200 aa). At tyrosine 246 the chain carries Phosphotyrosine. In terms of domain architecture, RRM 3 spans 289–364; the sequence is HCVHMRGLPY…RYVELFLNST (76 aa). Serine 310 is subject to Phosphoserine. 3 tandem repeats follow at residues 354-372, 374-392, and 418-433. The tract at residues 354–392 is 2 X 19 AA perfect repeats; sequence HRYVELFLNSTAGASGGAYEHRYVELFLNSTAGASGGAY.

In terms of assembly, part of a ternary complex containing FUBP2, PTBP1, PTBP2 and HNRNPH1. Identified in the spliceosome C complex. Interacts with IGF2BP1. Interacts with CUGBP1; the interaction is RNA-dependent. Interacts with MBNL1; the interaction in RNA-independent.

Its subcellular location is the nucleus. It is found in the nucleoplasm. Functionally, this protein is a component of the heterogeneous nuclear ribonucleoprotein (hnRNP) complexes which provide the substrate for the processing events that pre-mRNAs undergo before becoming functional, translatable mRNAs in the cytoplasm. Mediates pre-mRNA alternative splicing regulation. Inhibits, together with CUGBP1, insulin receptor (IR) pre-mRNA exon 11 inclusion in myoblast. Binds to the IR RNA. Binds poly(RG). The polypeptide is Heterogeneous nuclear ribonucleoprotein H (Hnrnph1) (Mus musculus (Mouse)).